We begin with the raw amino-acid sequence, 964 residues long: MALRRLSKSVSSAIKAQYTLSRPSPLLRSRSLSSSPHYTSIGRPTNSFIGKINNSSITHATTTHGQLFPLSSPRRFCTTTAQVNQNEFTEMAWEGLINAFDAARESKQQIVESEHLMKALLEQKDGMARKIFTKAGIDNSSVLQATDLFISKQPTVSDASGQRLGSSLSVILENAKRHKKDMLDSYVSVEHFLLAYYSDTRFGQEFFRDMKLDIQVLKDAIKDVRGDQRVTDRNPESKYQALEKYGNDLTEMARRGKLDPVIGRDDEIRRCIQILCRRTKNNPVIIGEPGVGKTAIAEGLAQRIVRGDVPEPLMNRKLISLDMGSLLAGAKFRGDFEERLKAVMKEVSASNGQTILFIDEIHTVVGAGAMDGAMDASNLLKPMLGRGELRCIGATTLTEYRKYIEKDPALERRFQQVLCVQPSVEDTISILRGLRERYELHHGVTISDSALVSAAVLADRYITERFLPDKAIDLVDEAGAKLKMEITSKPTELDGIDRAVIKLEMEKLSLKNDTDKASKERLQKIENDLSTLKQKQKELNVQWEKEKSLMTKIRSFKEEIDRVNLEIESAEREYDLNRAAELKYGTLLSLQRQLEEAEKNLTNFRQFGQSLLREVVTDLDIAEIVSKWTGIPLSNLQQSEREKLVMLEEVLHHRVIGQDMAVKSVADAIRRSRAGLSDPNRPIASFMFMGPTGVGKTELAKALAGYLFNTENAIVRVDMSEYMEKHSVSRLVGAPPGYVGYEEGGQLTEVVRRRPYSVVLFDEIEKAHPDVFNILLQLLDDGRITDSQGRTVSFKNCVVIMTSNIGSHHILETLRNNEDSKEAVYEIMKRQVVELARQNFRPEFMNRIDEYIVFQPLDSNEISKIVELQMRRVKNSLEQKKIKLQYTKEAVDLLAQLGFDPNYGARPVKRVIQQMVENEIAVGILKGDFAEEDTVLVDVDHLASDNKLVIKKLESNASAEEMAA.

Residues 1 to 39 (MALRRLSKSVSSAIKAQYTLSRPSPLLRSRSLSSSPHYT) constitute a mitochondrion transit peptide. Residues 83–227 (VNQNEFTEMA…KDAIKDVRGD (145 aa)) form the Clp R domain. Repeat regions lie at residues 88 to 153 (FTEM…ISKQ) and 164 to 227 (LGSS…VRGD). Residues 242–490 (LEKYGNDLTE…KLKMEITSKP (249 aa)) are i. ATP is bound by residues 287–294 (GEPGVGKT) and 690–697 (GPTGVGKT). The II stretch occupies residues 616–807 (VTDLDIAEIV…VVIMTSNIGS (192 aa)).

This sequence belongs to the ClpA/ClpB family.

It is found in the mitochondrion. In terms of biological role, molecular chaperone that does not seem to be involved in heat stress response or tolerance. In Arabidopsis thaliana (Mouse-ear cress), this protein is Chaperone protein ClpB4, mitochondrial (CLPB4).